The sequence spans 524 residues: Glutamyl-tRNA(Gln) amidotransferase subunit A, mitochondrial (524 aa).

Active-site charge relay system residues include Lys76 and Ser171. Ser195 serves as the catalytic Acyl-ester intermediate.

The protein belongs to the amidase family. GatA subfamily. Subunit of the heterotrimeric GatCAB amidotransferase (AdT) complex, composed of A (qrsl1), B (gatb) and C (gatc) subunits.

It localises to the mitochondrion. The catalysed reaction is L-glutamyl-tRNA(Gln) + L-glutamine + ATP + H2O = L-glutaminyl-tRNA(Gln) + L-glutamate + ADP + phosphate + H(+). In terms of biological role, allows the formation of correctly charged Gln-tRNA(Gln) through the transamidation of misacylated Glu-tRNA(Gln) in the mitochondria. The reaction takes place in the presence of glutamine and ATP through an activated gamma-phospho-Glu-tRNA(Gln). The sequence is that of Glutamyl-tRNA(Gln) amidotransferase subunit A, mitochondrial (qrsl1) from Xenopus tropicalis (Western clawed frog).